The primary structure comprises 88 residues: Small ribosomal subunit protein bS20 (88 aa).

The segment at M1–M27 is disordered.

It belongs to the bacterial ribosomal protein bS20 family.

Binds directly to 16S ribosomal RNA. This chain is Small ribosomal subunit protein bS20, found in Shewanella frigidimarina (strain NCIMB 400).